The sequence spans 193 residues: Ribonuclease HII (193 aa).

Residues 15-193 (YIVAGVDEAG…SYHRRSFKSC (179 aa)) form the RNase H type-2 domain. A divalent metal cation contacts are provided by aspartate 21, glutamate 22, and aspartate 112.

Belongs to the RNase HII family. The cofactor is Mn(2+). Mg(2+) is required as a cofactor.

It localises to the cytoplasm. It catalyses the reaction Endonucleolytic cleavage to 5'-phosphomonoester.. In terms of biological role, endonuclease that specifically degrades the RNA of RNA-DNA hybrids. The polypeptide is Ribonuclease HII (rnhB) (Rickettsia prowazekii (strain Madrid E)).